The sequence spans 384 residues: MEVSGHPQARRCCPEALGKLFPGLCFLCFLVTYALVGAVVFSAIEDGQVLVAADDGEFEKFLEELCRILNCSETVVEDRKQDLQGHLQKVKPQWFNRTTHWSFLSSLFFCCTVFSTVGYGYIYPVTRLGKYLCMLYALFGIPLMFLVLTDTGDILATILSTSYNRFRKFPFFTRPLLSKWCPKSLFKKKPDPKPADEAVPQIIISAEELPGPKLGTCPSRPSCSMELFERSHALEKQNTLQLPPQAMERSNSCPELVLGRLSYSIISNLDEVGQQVERLDIPLPIIALIVFAYISCAAAILPFWETQLDFENAFYFCFVTLTTIGFGDTVLEHPNFFLFFSIYIIVGMEIVFIAFKLVQNRLIDIYKNVMLFFAKGKFYHLVKK.

Residues 1 to 23 (MEVSGHPQARRCCPEALGKLFPG) are Cytoplasmic-facing. Residues 24-44 (LCFLCFLVTYALVGAVVFSAI) form a helical membrane-spanning segment. N-linked (GlcNAc...) asparagine glycosylation occurs at Asn-70. The pore-forming intramembrane region spans 103–129 (FLSSLFFCCTVFSTVGYGYIYPVTRLG). Residues Thr-116, Val-117, Gly-118, and Tyr-119 each contribute to the K(+) site. Positions 116–121 (TVGYGY) are selectivity filter 1. A helical transmembrane segment spans residues 130-148 (KYLCMLYALFGIPLMFLVL). At 149 to 280 (TDTGDILATI…EVGQQVERLD (132 aa)) the chain is on the cytoplasmic side. Residues 200 to 205 (PQIIIS) are interaction with calcineurin. The interval 249–254 (RSNSCP) is interaction with YWHAH. A phosphoserine mark is found at Ser-252 and Ser-264. A helical membrane pass occupies residues 281–301 (IPLPIIALIVFAYISCAAAIL). The segment at residues 314–328 (FYFCFVTLTTIGFGD) is an intramembrane region (pore-forming). The interval 323–328 (TIGFGD) is selectivity filter 2. The helical transmembrane segment at 335–355 (NFFLFFSIYIIVGMEIVFIAF) threads the bilayer. At 356 to 384 (KLVQNRLIDIYKNVMLFFAKGKFYHLVKK) the chain is on the cytoplasmic side.

This sequence belongs to the two pore domain potassium channel (TC 1.A.1.8) family. Homodimer. Heterodimer with KCNK2. Heterodimer with KCNK10. Interacts with calcineurin. Interacts with YWHAH, in a phosphorylation-dependent manner. In terms of processing, N-glycosylated. Phosphorylation of Ser-264 is required for the binding of 14-3-3eta/YWHAH. Calcineurin-mediated dephosphorylation enhances channel activity. As to expression, expressed in dorsal root ganglion and trigeminal ganglion neurons. Detected at low levels in spinal cord. Expressed in regulatory T cells (at protein level).

It localises to the cell membrane. The catalysed reaction is K(+)(in) = K(+)(out). With respect to regulation, activated by volatile anesthetics but inhibited by amide local anesthetics. Inhibited by Ba(2+) ions. Inhibited by free polyunsaturated fatty acids. Channel conductance is sensitive to intracellular pH, it decreases at acidic pH and increases at basic pH. In contrast to its mouse ortholog, it is not regulated by extracellular protons. Insensitive to changes in temperature. Its function is as follows. K(+) channel that conducts outward and inward rectifying currents at depolarized and hyperpolarized membrane potentials, respectively. The outward rectifying currents are voltage-dependent, coupled to K(+) electrochemical gradient across the membrane, whereas the inward currents can be induced in response to activation of Ca(2+)-mobilizing receptors. Homo- and heterodimerizes to form functional channels with distinct regulatory and gating properties. In trigeminal ganglia sensory neurons, the heterodimers of KCNK18/TRESK and KCNK2/TREK-1 or KCNK10/TREK-2 inhibit neuronal firing and neurogenic inflammation by stabilizing the resting membrane potential at K(+) equilibrium potential as well as by regulating the threshold of action potentials and the spike frequency. In thymocytes, conducts K(+) currents upon T cell receptor (TCR) signaling leading to sustained Ca(2+) influx and NF-kappa-B activation, FOXP3 transcription and positive selection of regulatory T cell (Treg) progenitor subsets. Appears to mediate the analgesics effects of hydroxy-alpha-sanshool, a metabolite naturally present in Schezuan pepper and other Xanthoxylum plants. This Homo sapiens (Human) protein is Potassium channel subfamily K member 18.